Reading from the N-terminus, the 373-residue chain is Phosphoserine aminotransferase (373 aa).

Residue Arg-41 coordinates L-glutamate. Pyridoxal 5'-phosphate is bound by residues 75–76, Trp-101, Thr-152, Asp-172, and Gln-195; that span reads GT. Lys-196 carries the post-translational modification N6-(pyridoxal phosphate)lysine. 236-237 is a pyridoxal 5'-phosphate binding site; the sequence is NT.

It belongs to the class-V pyridoxal-phosphate-dependent aminotransferase family. SerC subfamily. As to quaternary structure, homodimer. Pyridoxal 5'-phosphate is required as a cofactor.

It is found in the cytoplasm. It catalyses the reaction O-phospho-L-serine + 2-oxoglutarate = 3-phosphooxypyruvate + L-glutamate. The enzyme catalyses 4-(phosphooxy)-L-threonine + 2-oxoglutarate = (R)-3-hydroxy-2-oxo-4-phosphooxybutanoate + L-glutamate. It participates in amino-acid biosynthesis; L-serine biosynthesis; L-serine from 3-phospho-D-glycerate: step 2/3. Catalyzes the reversible conversion of 3-phosphohydroxypyruvate to phosphoserine and of 3-hydroxy-2-oxo-4-phosphonooxybutanoate to phosphohydroxythreonine. The sequence is that of Phosphoserine aminotransferase from Lactobacillus helveticus (strain DPC 4571).